The primary structure comprises 144 residues: MKPGEYVLADAPVVCNRGREAVELSVTNRGDRPVQVGSHFHFAEANRALDFDRQAALGCRLDIPAGTAVRLEPGDETTVKLIPLGGDRVVYGFRDMVDGSLDPHEAAGLHAAPAAPAIPARHESAAGDAPSPLKERAGFDNETR.

Positions 110-119 (HAAPAAPAIP) are enriched in low complexity. The tract at residues 110–144 (HAAPAAPAIPARHESAAGDAPSPLKERAGFDNETR) is disordered. Positions 133-144 (LKERAGFDNETR) are enriched in basic and acidic residues.

It belongs to the urease beta subunit family. As to quaternary structure, heterotrimer of UreA (gamma), UreB (beta) and UreC (alpha) subunits. Three heterotrimers associate to form the active enzyme.

It is found in the cytoplasm. The enzyme catalyses urea + 2 H2O + H(+) = hydrogencarbonate + 2 NH4(+). The protein operates within nitrogen metabolism; urea degradation; CO(2) and NH(3) from urea (urease route): step 1/1. The polypeptide is Urease subunit beta (Micrococcus luteus (strain ATCC 4698 / DSM 20030 / JCM 1464 / CCM 169 / CCUG 5858 / IAM 1056 / NBRC 3333 / NCIMB 9278 / NCTC 2665 / VKM Ac-2230) (Micrococcus lysodeikticus)).